A 451-amino-acid polypeptide reads, in one-letter code: Glucose-6-phosphate isomerase (451 aa).

Glu291 (proton donor) is an active-site residue. Active-site residues include His312 and Lys426.

This sequence belongs to the GPI family.

It localises to the cytoplasm. The catalysed reaction is alpha-D-glucose 6-phosphate = beta-D-fructose 6-phosphate. The protein operates within carbohydrate biosynthesis; gluconeogenesis. It functions in the pathway carbohydrate degradation; glycolysis; D-glyceraldehyde 3-phosphate and glycerone phosphate from D-glucose: step 2/4. Its function is as follows. Catalyzes the reversible isomerization of glucose-6-phosphate to fructose-6-phosphate. This chain is Glucose-6-phosphate isomerase, found in Thermoanaerobacter sp. (strain X514).